We begin with the raw amino-acid sequence, 346 residues long: UPF0283 membrane protein VIBHAR_01918 (346 aa).

Basic and acidic residues predominate over residues 1–17 (MSELKQKQVFKEKVMHS). Residues 1 to 28 (MSELKQKQVFKEKVMHSEEEDVSPELNT) form a disordered region. 2 helical membrane-spanning segments follow: residues 73–93 (LFATFAGLVVWQAVDSVITAI) and 98–118 (WLALGWVGFITTIASFGLGAL).

Belongs to the UPF0283 family.

The protein localises to the cell inner membrane. In Vibrio campbellii (strain ATCC BAA-1116), this protein is UPF0283 membrane protein VIBHAR_01918.